Here is a 190-residue protein sequence, read N- to C-terminus: Peptidyl-tRNA hydrolase (190 aa).

Phenylalanine 14 serves as a coordination point for tRNA. Catalysis depends on histidine 19, which acts as the Proton acceptor. Methionine 64, asparagine 66, and asparagine 112 together coordinate tRNA.

This sequence belongs to the PTH family. As to quaternary structure, monomer.

It localises to the cytoplasm. It catalyses the reaction an N-acyl-L-alpha-aminoacyl-tRNA + H2O = an N-acyl-L-amino acid + a tRNA + H(+). Its function is as follows. Hydrolyzes ribosome-free peptidyl-tRNAs (with 1 or more amino acids incorporated), which drop off the ribosome during protein synthesis, or as a result of ribosome stalling. Functionally, catalyzes the release of premature peptidyl moieties from peptidyl-tRNA molecules trapped in stalled 50S ribosomal subunits, and thus maintains levels of free tRNAs and 50S ribosomes. This is Peptidyl-tRNA hydrolase from Staphylococcus epidermidis (strain ATCC 35984 / DSM 28319 / BCRC 17069 / CCUG 31568 / BM 3577 / RP62A).